Reading from the N-terminus, the 151-residue chain is Deoxyuridine 5'-triphosphate nucleotidohydrolase (151 aa).

Residues 70–72 (RSG), N83, 87–89 (LID), and M97 each bind substrate.

The protein belongs to the dUTPase family. The cofactor is Mg(2+).

The enzyme catalyses dUTP + H2O = dUMP + diphosphate + H(+). Its pathway is pyrimidine metabolism; dUMP biosynthesis; dUMP from dCTP (dUTP route): step 2/2. Its function is as follows. This enzyme is involved in nucleotide metabolism: it produces dUMP, the immediate precursor of thymidine nucleotides and it decreases the intracellular concentration of dUTP so that uracil cannot be incorporated into DNA. This chain is Deoxyuridine 5'-triphosphate nucleotidohydrolase, found in Pseudomonas syringae pv. syringae (strain B728a).